The following is a 160-amino-acid chain: Phosphopantetheine adenylyltransferase (160 aa).

Position 9 (S9) interacts with substrate. Residues S9 to L10 and H17 contribute to the ATP site. Residues K41, L74, and K88 each contribute to the substrate site. ATP is bound by residues G89–R91, E99, and Y123–T129.

This sequence belongs to the bacterial CoaD family. Homohexamer. Requires Mg(2+) as cofactor.

Its subcellular location is the cytoplasm. It carries out the reaction (R)-4'-phosphopantetheine + ATP + H(+) = 3'-dephospho-CoA + diphosphate. Its pathway is cofactor biosynthesis; coenzyme A biosynthesis; CoA from (R)-pantothenate: step 4/5. Its function is as follows. Reversibly transfers an adenylyl group from ATP to 4'-phosphopantetheine, yielding dephospho-CoA (dPCoA) and pyrophosphate. The chain is Phosphopantetheine adenylyltransferase from Renibacterium salmoninarum (strain ATCC 33209 / DSM 20767 / JCM 11484 / NBRC 15589 / NCIMB 2235).